A 257-amino-acid chain; its full sequence is UPF0758 protein Bcenmc03_2526 (257 aa).

A disordered region spans residues 1-53 (MLSPCPILPSAECRDTADTPADPPGRVIPINRRRRRPGDWRPERPRERLLERG). Residues 37-51 (PGDWRPERPRERLLE) are compositionally biased toward basic and acidic residues. One can recognise an MPN domain in the interval 135 to 257 (QIDSPGAVED…TFSFARAGWL (123 aa)). Histidine 206, histidine 208, and aspartate 219 together coordinate Zn(2+). Residues 206-219 (HNHPSGAVQPSAED) carry the JAMM motif motif.

Belongs to the UPF0758 family.

The protein is UPF0758 protein Bcenmc03_2526 of Burkholderia orbicola (strain MC0-3).